The chain runs to 62 residues: Conotoxin Qc5.1 (62 aa).

Residues 1–22 (MRCVPVFIILLLLSPSAPSVDA) form the signal peptide. Residues 23–48 (HPMTKDDVPQASFHDDAKRTLQVPWM) constitute a propeptide that is removed on maturation. V60 is modified (valine amide).

The protein belongs to the conotoxin T superfamily. Contains 2 disulfide bonds that can be either 'C1-C3, C2-C4' or 'C1-C4, C2-C3', since these disulfide connectivities have been observed for conotoxins with cysteine framework V (for examples, see AC P0DQQ7 and AC P81755). As to expression, expressed by the venom duct.

It is found in the secreted. The protein is Conotoxin Qc5.1 of Conus quercinus (Oak cone).